Consider the following 937-residue polypeptide: Chaperone protein ClpD2, chloroplastic (937 aa).

The transit peptide at 1–80 (MEACCCSSSS…FERFTERAVK (80 aa)) directs the protein to the chloroplast. Repeat regions lie at residues 81-137 (AVVF…VGKE) and 152-217 (FSGA…VQGE). A Clp R domain is found at 81 to 217 (AVVFSQREAR…KQALTRVQGE (137 aa)). The tract at residues 259 to 513 (LALFCLDLTM…RMESFKRKKE (255 aa)) is i. ATP contacts are provided by residues 304 to 311 (GEAGVGKT) and 658 to 665 (GPTGVGKT). Positions 584–775 (VGSEEIARVT…LIVMTSNVGS (192 aa)) are II.

This sequence belongs to the ClpA/ClpB family. ClpD subfamily. As to expression, highly expressed in stems, culms and leaves.

It is found in the plastid. It localises to the chloroplast. Molecular chaperone that may interact with a ClpP-like protease involved in degradation of denatured proteins in the chloroplast. The polypeptide is Chaperone protein ClpD2, chloroplastic (CLPD2) (Oryza sativa subsp. japonica (Rice)).